The primary structure comprises 289 residues: Mitochondrial fission regulator 1-like (289 aa).

Residue Thr27 is modified to Phosphothreonine. The residue at position 38 (Ser38) is a Phosphoserine. Ser100 is subject to Phosphoserine; by AMPK. Ser107, Ser221, and Ser222 each carry phosphoserine. Ser235 carries the post-translational modification Phosphoserine; by AMPK. Phosphoserine is present on residues Ser258 and Ser270.

This sequence belongs to the MTFR1 family. Post-translationally, phosphorylated by AMPK. Upon stress, phosphorylation at Ser-100 and Ser-235 by AMPK is sufficient to induce mitochondrial fragmentation.

The protein resides in the mitochondrion outer membrane. In terms of biological role, mitochondrial protein required for adaptation of miochondrial dynamics to metabolic changes. Regulates mitochondrial morphology at steady state and mediates AMPK-dependent stress-induced mitochondrial fragmentation via the control of OPA1 levels. This is Mitochondrial fission regulator 1-like (Mtfr1l) from Mus musculus (Mouse).